We begin with the raw amino-acid sequence, 398 residues long: Putative glutamate--cysteine ligase 2 (398 aa).

The protein belongs to the glutamate--cysteine ligase type 2 family. YbdK subfamily.

It catalyses the reaction L-cysteine + L-glutamate + ATP = gamma-L-glutamyl-L-cysteine + ADP + phosphate + H(+). Functionally, ATP-dependent carboxylate-amine ligase which exhibits weak glutamate--cysteine ligase activity. This Micrococcus luteus (strain ATCC 4698 / DSM 20030 / JCM 1464 / CCM 169 / CCUG 5858 / IAM 1056 / NBRC 3333 / NCIMB 9278 / NCTC 2665 / VKM Ac-2230) (Micrococcus lysodeikticus) protein is Putative glutamate--cysteine ligase 2.